Reading from the N-terminus, the 331-residue chain is UPF0194 membrane protein YbhG (331 aa).

The N-terminal stretch at 1–19 (MKKPVVIGLAIAAIVAVIA) is a signal peptide. Residues 107-208 (EEIAQAAAAV…LDLQDTTLIA (102 aa)) are a coiled coil.

It belongs to the UPF0194 family.

The protein resides in the periplasm. This Salmonella gallinarum (strain 287/91 / NCTC 13346) protein is UPF0194 membrane protein YbhG.